The sequence spans 269 residues: Subtilisin Savinase (269 aa).

Glutamine 2 provides a ligand contact to Ca(2+). One can recognise a Peptidase S8 domain in the interval 5-268; the sequence is PWGISRVQAP…SGLVNAEAAT (264 aa). Aspartate 32 functions as the Charge relay system in the catalytic mechanism. Residue aspartate 40 participates in Ca(2+) binding. The active-site Charge relay system is the histidine 62. 7 residues coordinate Ca(2+): leucine 73, asparagine 75, isoleucine 77, valine 79, alanine 163, tyrosine 165, and alanine 168. The active-site Charge relay system is the serine 215.

Belongs to the peptidase S8 family. Requires Ca(2+) as cofactor.

It localises to the secreted. The enzyme catalyses Hydrolysis of proteins with broad specificity for peptide bonds, and a preference for a large uncharged residue in P1. Hydrolyzes peptide amides.. In terms of biological role, subtilisin is an extracellular alkaline serine protease, it catalyzes the hydrolysis of proteins and peptide amides. In Lederbergia lenta (Bacillus lentus), this protein is Subtilisin Savinase.